The chain runs to 328 residues: Malate dehydrogenase (328 aa).

Residue 11-17 (GAAGQIG) participates in NAD(+) binding. R94 and R100 together coordinate substrate. NAD(+) contacts are provided by residues N107, Q114, and 131-133 (VGN). 2 residues coordinate substrate: N133 and R164. Catalysis depends on H189, which acts as the Proton acceptor.

The protein belongs to the LDH/MDH superfamily. MDH type 2 family.

The enzyme catalyses (S)-malate + NAD(+) = oxaloacetate + NADH + H(+). Functionally, catalyzes the reversible oxidation of malate to oxaloacetate. This is Malate dehydrogenase from Acinetobacter baylyi (strain ATCC 33305 / BD413 / ADP1).